The following is a 432-amino-acid chain: Trigger factor (432 aa).

Residues 161-246 (EDRVTIDFTG…LKKVEERELP (86 aa)) form the PPIase FKBP-type domain.

This sequence belongs to the FKBP-type PPIase family. Tig subfamily. In terms of assembly, homodimer and monomer. In vivo most of the ribosomes are in complex with monomeric TF. Uncomplexed TF, however, is in a monomer-dimer equilibrium with approximately two thirds of TF existing in a dimeric state.

It localises to the cytoplasm. It catalyses the reaction [protein]-peptidylproline (omega=180) = [protein]-peptidylproline (omega=0). Involved in protein export. Acts as a chaperone by maintaining the newly synthesized protein in an open conformation. Functions as a peptidyl-prolyl cis-trans isomerase. The polypeptide is Trigger factor (Shigella boydii serotype 18 (strain CDC 3083-94 / BS512)).